We begin with the raw amino-acid sequence, 348 residues long: MADIYRFPKFSYEDNGTVEPLPLRTGPDKKAIPHIRIIKVGVPPKHGVRYLDLLLLGFFETPKQTTNLGSVSDLTEPTSYSICGSGSLPIGVAKYYGTDQELLKACTDLRITVRRTVRAGEMIVYMVGSIGAPLLPWSGRLRQGMIFNANKVALAPQCLPVDKDIRLRVVFVNGTSLGAITIAKIPKTLADLALPNSISVNLLVTLKTGISTEQKGVLPVLDDQGEKKLNFMVHLGLIRRKVGKIYSVEYCKSKIERMRLIFSLGLTGGISFHVQVTGTLSKTFMSQLAWKRAVCFPLMDVNPHMNMVIWAASVEITGVDAVFQPAIPRDFRYYPNVVAKNIGRIRKL.

The YLDL motif motif lies at 50-53 (YLDL). A Phosphoserine; by host modification is found at S70.

Belongs to the morbillivirus/respirovirus/rubulavirus M protein family. As to quaternary structure, homomultimer. Binds to the cytoplasmic regions of F and HN proteins. Interacts with nucleocapsid. Interacts with human alpha-tubulin and beta-tubulin. Interacts with host ANP32B. Post-translationally, a large portion is phosphorylated in the cytoplasm, but not in virion. However, this phosphorylation is not essential for virus replication.

It is found in the virion. The protein resides in the host cytoplasm. It localises to the host cell membrane. Its function is as follows. Plays a crucial role in virion assembly and budding. Forms a shell at the inner face of the plasma membrane and concentrates the HN and F glycoproteins. Acts as a negative regulator for transcription and replication by sticking to the nucleocapsid. This effect might be regulated by the cytoplasmic interaction with tubulin that dissociates the M protein from the nucleocapsid. In Sendai virus (strain Enders) (SeV), this protein is Matrix protein (M).